A 346-amino-acid chain; its full sequence is N-acetyl-gamma-glutamyl-phosphate reductase (346 aa).

Cys-149 is an active-site residue.

It belongs to the NAGSA dehydrogenase family. Type 1 subfamily.

The protein resides in the cytoplasm. The enzyme catalyses N-acetyl-L-glutamate 5-semialdehyde + phosphate + NADP(+) = N-acetyl-L-glutamyl 5-phosphate + NADPH + H(+). It participates in amino-acid biosynthesis; L-arginine biosynthesis; N(2)-acetyl-L-ornithine from L-glutamate: step 3/4. Functionally, catalyzes the NADPH-dependent reduction of N-acetyl-5-glutamyl phosphate to yield N-acetyl-L-glutamate 5-semialdehyde. The sequence is that of N-acetyl-gamma-glutamyl-phosphate reductase from Geotalea daltonii (strain DSM 22248 / JCM 15807 / FRC-32) (Geobacter daltonii).